Here is a 127-residue protein sequence, read N- to C-terminus: Large ribosomal subunit protein bL17 (127 aa).

This sequence belongs to the bacterial ribosomal protein bL17 family. As to quaternary structure, part of the 50S ribosomal subunit. Contacts protein L32.

In Lactobacillus delbrueckii subsp. bulgaricus (strain ATCC 11842 / DSM 20081 / BCRC 10696 / JCM 1002 / NBRC 13953 / NCIMB 11778 / NCTC 12712 / WDCM 00102 / Lb 14), this protein is Large ribosomal subunit protein bL17.